We begin with the raw amino-acid sequence, 428 residues long: Enolase (428 aa).

Gln-163 serves as a coordination point for (2R)-2-phosphoglycerate. The active-site Proton donor is the Glu-205. Mg(2+) is bound by residues Asp-242, Glu-285, and Asp-311. (2R)-2-phosphoglycerate is bound by residues Lys-336, Arg-365, Ser-366, and Lys-387. Lys-336 functions as the Proton acceptor in the catalytic mechanism.

The protein belongs to the enolase family. Mg(2+) serves as cofactor.

It is found in the cytoplasm. Its subcellular location is the secreted. It localises to the cell surface. The catalysed reaction is (2R)-2-phosphoglycerate = phosphoenolpyruvate + H2O. The protein operates within carbohydrate degradation; glycolysis; pyruvate from D-glyceraldehyde 3-phosphate: step 4/5. Catalyzes the reversible conversion of 2-phosphoglycerate (2-PG) into phosphoenolpyruvate (PEP). It is essential for the degradation of carbohydrates via glycolysis. This chain is Enolase, found in Desulfatibacillum aliphaticivorans.